The following is a 280-amino-acid chain: MTSNSHVKIGIIGGSGLDDPDILEGRTERYVVTPYGKPSDALILGKIKNVDCVLLARHGRQHTIMPTNVNYQANIWALKEEGCTHLLVTTACGSLREDIQPGDIVLIDQFIDRTTKRVQTFYDGQPTSPPGVCHIPMAEPFCSKTREVLLEVAQGLGVKCHTRGTMVTIEGPRFSSRAESLMFRQWGADVINMTTVPEVVLAKEAGLCYASIAMATDYDCWKEHEEAVCVDNVLKTMKENANKASSILLTAIPQICQMDWDSTINAHKSMSQSSVMLPKH.

Residues serine 15, 57–58 (RH), and 90–91 (TA) contribute to the phosphate site. A substrate-binding site is contributed by methionine 193. Threonine 194 provides a ligand contact to phosphate. 217–219 (DYD) is a binding site for substrate.

The protein belongs to the PNP/MTAP phosphorylase family. MTAP subfamily. Homotrimer.

It localises to the cytoplasm. The protein localises to the nucleus. It carries out the reaction S-methyl-5'-thioadenosine + phosphate = 5-(methylsulfanyl)-alpha-D-ribose 1-phosphate + adenine. It functions in the pathway amino-acid biosynthesis; L-methionine biosynthesis via salvage pathway; S-methyl-5-thio-alpha-D-ribose 1-phosphate from S-methyl-5'-thioadenosine (phosphorylase route): step 1/1. Catalyzes the reversible phosphorylation of S-methyl-5'-thioadenosine (MTA) to adenine and 5-methylthioribose-1-phosphate. Involved in the breakdown of MTA, a major by-product of polyamine biosynthesis. Responsible for the first step in the methionine salvage pathway after MTA has been generated from S-adenosylmethionine. Has broad substrate specificity with 6-aminopurine nucleosides as preferred substrates. This chain is S-methyl-5'-thioadenosine phosphorylase (mtap), found in Danio rerio (Zebrafish).